The sequence spans 355 residues: Peptide chain release factor 1 (355 aa).

Glutamine 233 bears the N5-methylglutamine mark.

The protein belongs to the prokaryotic/mitochondrial release factor family. Post-translationally, methylated by PrmC. Methylation increases the termination efficiency of RF1.

It is found in the cytoplasm. Functionally, peptide chain release factor 1 directs the termination of translation in response to the peptide chain termination codons UAG and UAA. The chain is Peptide chain release factor 1 from Caldicellulosiruptor bescii (strain ATCC BAA-1888 / DSM 6725 / KCTC 15123 / Z-1320) (Anaerocellum thermophilum).